A 343-amino-acid polypeptide reads, in one-letter code: MRLSDFDFELPEELIAQHPLAQRQASRLMVLNRVTQQLQLAQFADIADWFRPGDVLVVNDTRVIPARLIGRKQTGGRIEVFLVRRLPGVEEVWACLTKCSKSPRPGTRLILGEGLEGTVVEGGEPPYRHVRFSFQGDFSQVLEQVGRIPLPPYIRREATPDDRSRYQTVFAREAGAVAAPTAGLHFTDEILDVLRAKGVEIQPLTLHVGLGTFLPMRTDDITEHRMHEENYFVPEGTAAAVNRAKDDGRRVIALGTTSTRTLEYAVDEQGRLQAGAGTCDLFIRPGFKFRIVDGLVTNFHLPCSTLLVLVAALAGREFILEAYQRAVAEKFRFFSYGDCMLIL.

Belongs to the QueA family. In terms of assembly, monomer.

The protein localises to the cytoplasm. It carries out the reaction 7-aminomethyl-7-carbaguanosine(34) in tRNA + S-adenosyl-L-methionine = epoxyqueuosine(34) in tRNA + adenine + L-methionine + 2 H(+). The protein operates within tRNA modification; tRNA-queuosine biosynthesis. Transfers and isomerizes the ribose moiety from AdoMet to the 7-aminomethyl group of 7-deazaguanine (preQ1-tRNA) to give epoxyqueuosine (oQ-tRNA). This chain is S-adenosylmethionine:tRNA ribosyltransferase-isomerase, found in Syntrophotalea carbinolica (strain DSM 2380 / NBRC 103641 / GraBd1) (Pelobacter carbinolicus).